The following is a 1583-amino-acid chain: Mediator of RNA polymerase II transcription subunit 12 (1583 aa).

2 disordered regions span residues 1–117 (MIPH…SLSW) and 1481–1525 (SNIP…SGIP). Positions 66-79 (DTSEREPPSKRLRL) are enriched in basic and acidic residues. 2 stretches are compositionally biased toward low complexity: residues 102 to 114 (TPST…KPSS) and 1490 to 1514 (PSPA…GSST).

It belongs to the Mediator complex subunit 12 family. In terms of assembly, component of the srb8-11 complex, which itself associates with the Mediator complex.

It localises to the nucleus. Component of the srb8-11 complex. The srb8-11 complex is a regulatory module of the Mediator complex which is itself involved in regulation of basal and activated RNA polymerase II-dependent transcription. The srb8-11 complex may be involved in the transcriptional repression of a subset of genes regulated by Mediator. It may inhibit the association of the Mediator complex with RNA polymerase II to form the holoenzyme complex. The sequence is that of Mediator of RNA polymerase II transcription subunit 12 (srb8) from Aspergillus terreus (strain NIH 2624 / FGSC A1156).